The following is a 340-amino-acid chain: Adenosine kinase (340 aa).

Residue aspartate 293 is part of the active site.

The protein belongs to the carbohydrate kinase PfkB family. As to quaternary structure, monomer. It depends on Mg(2+) as a cofactor.

The enzyme catalyses adenosine + ATP = AMP + ADP + H(+). It functions in the pathway purine metabolism; AMP biosynthesis via salvage pathway; AMP from adenosine: step 1/1. Its function is as follows. ATP dependent phosphorylation of adenosine and other related nucleoside analogs to monophosphate derivatives. This is Adenosine kinase (adk) from Dictyostelium discoideum (Social amoeba).